Reading from the N-terminus, the 180-residue chain is MFEATTILGYRGELNHKKFALIGGDGQVTLGNCVVKANATKIRSLYHNQVLSGFAGSTADAFSLFDMFERILESKKGDLFKSVVDFSKEWRKDKYLRRLEAMMIVLNFDHIFILSGMGDVLEAEDNKIAAIGSGGNYALSAARALDHFAHLEPRKLVEESLKIAGDLCIYTNTNIKILEL.

Thr5 is an active-site residue. 3 residues coordinate Na(+): Gly165, Cys168, and Thr171.

The protein belongs to the peptidase T1B family. HslV subfamily. In terms of assembly, a double ring-shaped homohexamer of HslV is capped on each side by a ring-shaped HslU homohexamer. The assembly of the HslU/HslV complex is dependent on binding of ATP.

The protein resides in the cytoplasm. The catalysed reaction is ATP-dependent cleavage of peptide bonds with broad specificity.. Its activity is regulated as follows. Allosterically activated by HslU binding. Its function is as follows. Protease subunit of a proteasome-like degradation complex believed to be a general protein degrading machinery. The sequence is that of ATP-dependent protease subunit HslV from Helicobacter pylori (strain ATCC 700392 / 26695) (Campylobacter pylori).